The primary structure comprises 812 residues: Leucine--tRNA ligase (812 aa).

The 'HIGH' region signature appears at 40–51 (SYPSGSNLHAGH). Residues 572 to 576 (KMSKS) carry the 'KMSKS' region motif. Lys575 provides a ligand contact to ATP.

Belongs to the class-I aminoacyl-tRNA synthetase family.

The protein localises to the cytoplasm. The catalysed reaction is tRNA(Leu) + L-leucine + ATP = L-leucyl-tRNA(Leu) + AMP + diphosphate. In Clostridium tetani (strain Massachusetts / E88), this protein is Leucine--tRNA ligase.